A 231-amino-acid polypeptide reads, in one-letter code: NADH-ubiquinone oxidoreductase chain 4 (231 aa).

Helical transmembrane passes span 1–21 (PIAGSMVLAAILLKLGGYGII), 34–54 (MFLPFIVLALWGAILANLTCL), 63–85 (IAYSSISHMGLVVAAIIIQTPWG), 89–111 (AMALMIAHGFTSSALFCLANTTY), 128–148 (ILPMATTWWLLTNLMNIAIPP), 156–176 (LLIMSALFNWCPTTIIMLGLS), and 211–231 (LLMILHLIPLMMISMKPELII).

The protein belongs to the complex I subunit 4 family.

The protein resides in the mitochondrion membrane. It catalyses the reaction a ubiquinone + NADH + 5 H(+)(in) = a ubiquinol + NAD(+) + 4 H(+)(out). Functionally, core subunit of the mitochondrial membrane respiratory chain NADH dehydrogenase (Complex I) that is believed to belong to the minimal assembly required for catalysis. Complex I functions in the transfer of electrons from NADH to the respiratory chain. The immediate electron acceptor for the enzyme is believed to be ubiquinone. The polypeptide is NADH-ubiquinone oxidoreductase chain 4 (MT-ND4) (Agkistrodon piscivorus piscivorus (Eastern cottonmouth)).